We begin with the raw amino-acid sequence, 84 residues long: uncharacterized protein (84 aa).

Residues 5–31 (KIQEIINELDNLMNRERKYIELVATVE) adopt a coiled-coil conformation.

This is an uncharacterized protein from Methanocaldococcus jannaschii (strain ATCC 43067 / DSM 2661 / JAL-1 / JCM 10045 / NBRC 100440) (Methanococcus jannaschii).